The following is a 229-amino-acid chain: Aspartate-rich protein 1 (229 aa).

Positions 84 to 106 (SEEDNDDAKILPSPVQGSSEDNL) are disordered.

The polypeptide is Aspartate-rich protein 1 (DRICH1) (Homo sapiens (Human)).